We begin with the raw amino-acid sequence, 502 residues long: Probable cytosol aminopeptidase (502 aa).

Mn(2+)-binding residues include K270 and D275. K282 is an active-site residue. 3 residues coordinate Mn(2+): D293, D352, and E354. R356 is a catalytic residue.

Belongs to the peptidase M17 family. It depends on Mn(2+) as a cofactor.

The protein localises to the cytoplasm. It catalyses the reaction Release of an N-terminal amino acid, Xaa-|-Yaa-, in which Xaa is preferably Leu, but may be other amino acids including Pro although not Arg or Lys, and Yaa may be Pro. Amino acid amides and methyl esters are also readily hydrolyzed, but rates on arylamides are exceedingly low.. The enzyme catalyses Release of an N-terminal amino acid, preferentially leucine, but not glutamic or aspartic acids.. Functionally, presumably involved in the processing and regular turnover of intracellular proteins. Catalyzes the removal of unsubstituted N-terminal amino acids from various peptides. The sequence is that of Probable cytosol aminopeptidase from Desulfotalea psychrophila (strain LSv54 / DSM 12343).